The chain runs to 603 residues: Prostaglandin G/H synthase 1 (603 aa).

An N-terminal signal peptide occupies residues 1-27 (MSRGSRLHRWPLLLLLLLLLPPPPVLP). The 39-residue stretch at 35–73 (PVNPCCYYPCQHQGICVRFGLDRYQCDCTRTGYSGPNCT) folds into the EGF-like domain. Disulfide bonds link C39–C50, C40–C162, C44–C60, and C62–C72. N-linked (GlcNAc...) asparagine glycans are attached at residues N71, N107, and N147. H210 serves as the catalytic Proton acceptor. Catalysis depends on Y388, which acts as the For cyclooxygenase activity. A heme b-binding site is contributed by H391. A disulfide bridge connects residues C572 and C578.

It belongs to the prostaglandin G/H synthase family. Homodimer. Heme b serves as cofactor. N-glycosylated. N-linked glycosylation is necessary for enzymatic activity. As to expression, brain cortex. Isoform 2 is expressed in the cerebral cortex and heart.

Its subcellular location is the microsome membrane. It is found in the endoplasmic reticulum membrane. It catalyses the reaction (5Z,8Z,11Z,14Z)-eicosatetraenoate + AH2 + 2 O2 = prostaglandin H2 + A + H2O. It carries out the reaction (5Z,8Z,11Z,14Z)-eicosatetraenoate + 2 O2 = prostaglandin G2. The enzyme catalyses prostaglandin G2 + AH2 = prostaglandin H2 + A + H2O. The catalysed reaction is (9Z,12Z)-octadecadienoate + AH2 + O2 = (9R)-hydroxy-(10E,12Z)-octadecadienoate + A + H2O. It catalyses the reaction (9Z,12Z)-octadecadienoate + AH2 + O2 = (9S)-hydroxy-(10E,12Z)-octadecadienoate + A + H2O. It carries out the reaction (9Z,12Z)-octadecadienoate + AH2 + O2 = (13S)-hydroxy-(9Z,11E)-octadecadienoate + A + H2O. The enzyme catalyses (9Z,12Z)-octadecadienoate + AH2 + O2 = (13R)-hydroxy-(9Z,11E)-octadecadienoate + A + H2O. It participates in lipid metabolism; prostaglandin biosynthesis. With respect to regulation, the cyclooxygenase activity is inhibited by nonsteroidal anti-inflammatory drugs (NSAIDs) including ibuprofen, flurbiprofen, ketoprofen, naproxen, flurbiprofen, anirolac, fenclofenac and diclofenac. In terms of biological role, dual cyclooxygenase and peroxidase that plays an important role in the biosynthesis pathway of prostanoids, a class of C20 oxylipins mainly derived from arachidonate ((5Z,8Z,11Z,14Z)-eicosatetraenoate, AA, C20:4(n-6)), with a particular role in the inflammatory response. The cyclooxygenase activity oxygenates AA to the hydroperoxy endoperoxide prostaglandin G2 (PGG2), and the peroxidase activity reduces PGG2 to the hydroxy endoperoxide prostaglandin H2 (PGH2), the precursor of all 2-series prostaglandins and thromboxanes. This complex transformation is initiated by abstraction of hydrogen at carbon 13 (with S-stereochemistry), followed by insertion of molecular O2 to form the endoperoxide bridge between carbon 9 and 11 that defines prostaglandins. The insertion of a second molecule of O2 (bis-oxygenase activity) yields a hydroperoxy group in PGG2 that is then reduced to PGH2 by two electrons. Involved in the constitutive production of prostanoids in particular in the stomach and platelets. In gastric epithelial cells, it is a key step in the generation of prostaglandins, such as prostaglandin E2 (PGE2), which plays an important role in cytoprotection. In platelets, it is involved in the generation of thromboxane A2 (TXA2), which promotes platelet activation and aggregation, vasoconstriction and proliferation of vascular smooth muscle cells. Can also use linoleate (LA, (9Z,12Z)-octadecadienoate, C18:2(n-6)) as substrate and produce hydroxyoctadecadienoates (HODEs) in a regio- and stereospecific manner, being (9R)-HODE ((9R)-hydroxy-(10E,12Z)-octadecadienoate) and (13S)-HODE ((13S)-hydroxy-(9Z,11E)-octadecadienoate) its major products. In Canis lupus familiaris (Dog), this protein is Prostaglandin G/H synthase 1 (PTGS1).